A 286-amino-acid polypeptide reads, in one-letter code: Nucleotide-binding protein HAPS_0087 (286 aa).

ATP is bound at residue G8–S15. D56–N59 serves as a coordination point for GTP.

It belongs to the RapZ-like family.

Displays ATPase and GTPase activities. This is Nucleotide-binding protein HAPS_0087 from Glaesserella parasuis serovar 5 (strain SH0165) (Haemophilus parasuis).